Consider the following 211-residue polypeptide: Large ribosomal subunit protein uL3 (211 aa).

Q150 carries the post-translational modification N5-methylglutamine.

The protein belongs to the universal ribosomal protein uL3 family. As to quaternary structure, part of the 50S ribosomal subunit. Forms a cluster with proteins L14 and L19. Methylated by PrmB.

One of the primary rRNA binding proteins, it binds directly near the 3'-end of the 23S rRNA, where it nucleates assembly of the 50S subunit. The polypeptide is Large ribosomal subunit protein uL3 (Pseudomonas savastanoi pv. phaseolicola (strain 1448A / Race 6) (Pseudomonas syringae pv. phaseolicola (strain 1448A / Race 6))).